Consider the following 111-residue polypeptide: Cytochrome c (111 aa).

Ala1 is modified (N-acetylalanine). Heme c contacts are provided by Cys22, Cys25, and His26. At Lys80 the chain carries N6,N6,N6-trimethyllysine. Met88 lines the heme c pocket. An N6,N6,N6-trimethyllysine modification is found at Lys94.

Belongs to the cytochrome c family. Binds 1 heme c group covalently per subunit.

Its subcellular location is the mitochondrion intermembrane space. Functionally, electron carrier protein. The oxidized form of the cytochrome c heme group can accept an electron from the heme group of the cytochrome c1 subunit of cytochrome reductase. Cytochrome c then transfers this electron to the cytochrome oxidase complex, the final protein carrier in the mitochondrial electron-transport chain. In Vigna radiata var. radiata (Mung bean), this protein is Cytochrome c.